Consider the following 579-residue polypeptide: Cyclin-T1-5 (579 aa).

2 disordered regions span residues 1-27 (MAGV…HEKQ) and 271-419 (RVPA…GDAL). The segment covering 11 to 20 (YSESGVSSHS) has biased composition (polar residues). Residues 274–283 (ASQGSEVESS) show a composition bias toward low complexity. Residues 306–334 (SRQTSSVRSTHEQSNSDNHGGSSKGVLNQ) show a composition bias toward polar residues. 2 stretches are compositionally biased toward basic and acidic residues: residues 349-380 (DNKE…EAPH) and 389-414 (PGKD…RNVD). Ser-423 is subject to Phosphoserine. Composition is skewed to basic and acidic residues over residues 474 to 512 (DEKT…KNTE), 538 to 556 (KQSE…ESHK), and 563 to 579 (HHGD…NNHS). Residues 474 to 579 (DEKTKERKVQ…RRHSQENNHS (106 aa)) are disordered.

The protein belongs to the cyclin family. Cyclin T subfamily.

This chain is Cyclin-T1-5 (CYCT1-5), found in Arabidopsis thaliana (Mouse-ear cress).